A 63-amino-acid polypeptide reads, in one-letter code: Period circadian protein (63 aa).

The interval 1–63 is disordered; the sequence is EGSGGSGSSG…VTLTESLLNK (63 aa). 2 stretches are compositionally biased toward low complexity: residues 9-31 and 39-49; these read SGNF…NAGT and SAAASGASVNA. Over residues 54 to 63 the composition is skewed to polar residues; the sequence is VTLTESLLNK.

In terms of assembly, forms a heterodimer with timeless (TIM); the complex then translocates into the nucleus. Phosphorylated with a circadian rhythmicity, probably by the double-time protein (dbt). Phosphorylation could be implicated in the stability of per monomer and in the formation of heterodimer per-tim.

It localises to the nucleus. It is found in the cytoplasm. Its subcellular location is the perinuclear region. In terms of biological role, essential for biological clock functions. Determines the period length of circadian and ultradian rhythms; an increase in PER dosage leads to shortened circadian rhythms and a decrease leads to lengthened circadian rhythms. Essential for the circadian rhythmicity of locomotor activity, eclosion behavior, and for the rhythmic component of the male courtship song that originates in the thoracic nervous system. The biological cycle depends on the rhythmic formation and nuclear localization of the TIM-PER complex. Light induces the degradation of TIM, which promotes elimination of PER. Nuclear activity of the heterodimer coordinatively regulates PER and TIM transcription through a negative feedback loop. Behaves as a negative element in circadian transcriptional loop. Does not appear to bind DNA, suggesting indirect transcriptional inhibition. This is Period circadian protein (per) from Drosophila immigrans (Fruit fly).